The sequence spans 407 residues: S-adenosylmethionine synthase (407 aa).

140-145 lines the ATP pocket; sequence GQGSAD.

Belongs to the AdoMet synthase 2 family. The cofactor is Mg(2+).

The catalysed reaction is L-methionine + ATP + H2O = S-adenosyl-L-methionine + phosphate + diphosphate. Its pathway is amino-acid biosynthesis; S-adenosyl-L-methionine biosynthesis; S-adenosyl-L-methionine from L-methionine: step 1/1. Its function is as follows. Catalyzes the formation of S-adenosylmethionine from methionine and ATP. The protein is S-adenosylmethionine synthase of Methanosphaera stadtmanae (strain ATCC 43021 / DSM 3091 / JCM 11832 / MCB-3).